A 204-amino-acid chain; its full sequence is Double homeobox protein A (204 aa).

The segment at residues 15–74 (HRRCRTKFTEEQLKILINTFNQKPYPGYATKQKLALEINTEESRIQIWFQNRRARHGFQK) is a DNA-binding region (homeobox 1). 2 disordered regions span residues 73–101 (QKRPEAETLESSQSQGQDQPGVEFQSREA) and 163–204 (EPVA…ARTW). A compositionally biased stretch (polar residues) spans 81 to 90 (LESSQSQGQD). Residues 101–160 (ARRCRTTYSASQLHTLIKAFMKNPYPGIDSREELAKEIGVPESRVQIWFQNRRSRLLLQR) constitute a DNA-binding region (homeobox 2). Over residues 184–197 (EDTQNGTNFTSDSH) the composition is skewed to polar residues.

It belongs to the paired homeobox family. As to expression, expressed in embryonic stem cells.

It is found in the nucleus. Its function is as follows. Transcription factor that acts as a repressor. The sequence is that of Double homeobox protein A from Homo sapiens (Human).